Reading from the N-terminus, the 573-residue chain is Septation ring formation regulator EzrA (573 aa).

Topologically, residues 1–2 are extracellular; it reads MQ. Residues 3 to 21 form a helical membrane-spanning segment; that stretch reads VAIGIVVVAIVIYAAVKGF. Residues 22–573 lie on the Cytoplasmic side of the membrane; sequence QFYIDKQVRQ…KQADKMNDEA (552 aa). Coiled coils occupy residues 100-188, 317-364, and 416-488; these read DAQQ…LAKA, LTHA…VYQA, and ETLQ…TLKE.

This sequence belongs to the EzrA family.

The protein resides in the cell membrane. In terms of biological role, negative regulator of FtsZ ring formation; modulates the frequency and position of FtsZ ring formation. Inhibits FtsZ ring formation at polar sites. Interacts either with FtsZ or with one of its binding partners to promote depolymerization. The chain is Septation ring formation regulator EzrA from Lactiplantibacillus plantarum (strain ATCC BAA-793 / NCIMB 8826 / WCFS1) (Lactobacillus plantarum).